We begin with the raw amino-acid sequence, 109 residues long: Class I hydrophobin G (109 aa).

Residues 1-19 form the signal peptide; the sequence is MRLSILSVFSLVGAGMVSA. 4 disulfide bridges follow: Cys36/Cys90, Cys42/Cys84, Cys43/Cys76, and Cys91/Cys105.

The protein belongs to the fungal hydrophobin family.

The protein localises to the secreted. It localises to the cell wall. Its function is as follows. Aerial growth, conidiation, and dispersal of filamentous fungi in the environment rely upon a capability of their secreting small amphipathic proteins called hydrophobins (HPBs) with low sequence identity. Class I can self-assemble into an outermost layer of rodlet bundles on aerial cell surfaces, conferring cellular hydrophobicity that supports fungal growth, development and dispersal; whereas Class II form highly ordered films at water-air interfaces through intermolecular interactions but contribute nothing to the rodlet structure. In P.expansum, hydrophobins contribute to germination, tolerance to cold stress and mycotoxins patulin and citrinin production. The protein is Class I hydrophobin G of Penicillium expansum (Blue mold rot fungus).